Reading from the N-terminus, the 175-residue chain is Heme-dependent oxidative N-demethylase delta subunit (175 aa).

As to quaternary structure, the heme-dependent oxidative N-demethylase (HODM) is a heterotetramer composed of a catalytic alpha subunit, a FMN/2Fe-2S-dependent oxidoreductase beta subunit, a gamma subunit with putative aminotransferase activity, and a delta subunit of unknown function.

Component of the heme-dependent oxidative N-demethylase (HODM) enzyme, that catalyzes the NADPH-dependent oxidation of dimethylamine (DMA) to methylamine (MA) and formaldehyde. Functions in bacterial methylated amine catabolism, linking alkylamine oxidation to the tetrahydrofolate C1 pool. The function of the delta subunit is unknown. The chain is Heme-dependent oxidative N-demethylase delta subunit from Ectopseudomonas mendocina (strain ymp) (Pseudomonas mendocina).